We begin with the raw amino-acid sequence, 167 residues long: MPIRARIIGIDPGLRFTGFGIIEADGNRLRHVADGVIATDGAAAVAERLHTLDAALARLLATYAPDHAAVEETYVNRNATATLKLGYARGVALLAPARAGIAVAEYGAKTVKRAVVGTGAAEKDQVALMVRRLLPGAAITRADAADALAVAICHAHHLATASRVPAA.

Active-site residues include aspartate 11, glutamate 71, and aspartate 143. The Mg(2+) site is built by aspartate 11, glutamate 71, and aspartate 143.

Belongs to the RuvC family. In terms of assembly, homodimer which binds Holliday junction (HJ) DNA. The HJ becomes 2-fold symmetrical on binding to RuvC with unstacked arms; it has a different conformation from HJ DNA in complex with RuvA. In the full resolvosome a probable DNA-RuvA(4)-RuvB(12)-RuvC(2) complex forms which resolves the HJ. It depends on Mg(2+) as a cofactor.

Its subcellular location is the cytoplasm. It carries out the reaction Endonucleolytic cleavage at a junction such as a reciprocal single-stranded crossover between two homologous DNA duplexes (Holliday junction).. Functionally, the RuvA-RuvB-RuvC complex processes Holliday junction (HJ) DNA during genetic recombination and DNA repair. Endonuclease that resolves HJ intermediates. Cleaves cruciform DNA by making single-stranded nicks across the HJ at symmetrical positions within the homologous arms, yielding a 5'-phosphate and a 3'-hydroxyl group; requires a central core of homology in the junction. The consensus cleavage sequence is 5'-(A/T)TT(C/G)-3'. Cleavage occurs on the 3'-side of the TT dinucleotide at the point of strand exchange. HJ branch migration catalyzed by RuvA-RuvB allows RuvC to scan DNA until it finds its consensus sequence, where it cleaves and resolves the cruciform DNA. The sequence is that of Crossover junction endodeoxyribonuclease RuvC from Acidiphilium cryptum (strain JF-5).